The sequence spans 294 residues: Flavin-dependent thymidylate synthase (294 aa).

In terms of domain architecture, ThyX spans 27 to 250; sequence GFIRVIDYMG…PFTYEAFEEY (224 aa). Residues Thr-73, 96–98, and Glu-104 each bind FAD; that span reads RHR. Residues 93–96, 104–108, and Arg-189 contribute to the dUMP site; these read QWIR and EYSAR. Residues 96-106 carry the ThyX motif motif; it reads RHRTASVNEYS. FAD contacts are provided by residues 205-207 and His-211; that span reads NLH. Residue Arg-216 coordinates dUMP. Arg-216 serves as the catalytic Involved in ionization of N3 of dUMP, leading to its activation.

It belongs to the thymidylate synthase ThyX family. In terms of assembly, homotetramer. FAD is required as a cofactor.

The enzyme catalyses dUMP + (6R)-5,10-methylene-5,6,7,8-tetrahydrofolate + NADPH + H(+) = dTMP + (6S)-5,6,7,8-tetrahydrofolate + NADP(+). It functions in the pathway pyrimidine metabolism; dTTP biosynthesis. Its function is as follows. Catalyzes the reductive methylation of 2'-deoxyuridine-5'-monophosphate (dUMP) to 2'-deoxythymidine-5'-monophosphate (dTMP) while utilizing 5,10-methylenetetrahydrofolate (mTHF) as the methyl donor, and NADPH and FADH(2) as the reductant. The chain is Flavin-dependent thymidylate synthase from Rickettsia typhi (strain ATCC VR-144 / Wilmington).